The primary structure comprises 972 residues: Protein NRDE2 homolog (972 aa).

Polar residues predominate over residues 1–17; the sequence is MPSNHNTSVPKFSSFNS. Residues 1–61 are disordered; that stretch reads MPSNHNTSVP…RSIQSNFAVD (61 aa). Over residues 19 to 33 the composition is skewed to basic residues; that stretch reads KAKKNPITKSNKKYR. Polar residues predominate over residues 37-59; it reads DQVSSNHAKSSFPSHRSIQSNFA. 7 HAT repeats span residues 159-191, 250-282, 318-350, 355-386, 608-640, 788-820, and 860-894; these read LNILKAIKETDEEIKKNPGKARLWIKMCEYQER, WSKEETNQKFEEVLIEHPGYLNLWMKYAEYFTG, TDVTSNFEVEEAILHLLIRLCDFLKNCGYYELA, QANMELCYFYPRYLEKKLDSTFFESFSKFWNS, EEKPQVNKIVKKILKKYDSSVSVWNTYAQLEHL, YNLPKVRPFFEKGVTLFSANTAIWEVYIFFESK, and TNSQYFLRTLDITLNNEKLKSVAKFWRIYLKILNL. A Phosphoserine modification is found at Ser970.

This sequence belongs to the NRDE2 family.

It localises to the nucleus. This is Protein NRDE2 homolog from Schizosaccharomyces pombe (strain 972 / ATCC 24843) (Fission yeast).